The following is a 938-amino-acid chain: TFIIH basal transcription factor complex helicase/translocase XPB subunit (938 aa).

In terms of domain architecture, Helicase ATP-binding spans 394–562 (FRSGNKAHQG…DLRHLVGPKL (169 aa)). 407-414 (LPCGAGKT) provides a ligand contact to ATP. A DEVH box motif is present at residues 515-518 (DEVH). A Helicase C-terminal domain is found at 627–781 (WCTQALLEFH…SYRVLQSDMV (155 aa)).

The protein belongs to the helicase family. RAD25/XPB subfamily. As to quaternary structure, component of the 7-subunit TFIIH core complex composed of XPB, XPD, SSL1, TFB1, TFB2, TFB4 and TFB5.

The enzyme catalyses Couples ATP hydrolysis with the unwinding of duplex DNA by translocating in the 3'-5' direction.. The catalysed reaction is ATP + H2O = ADP + phosphate + H(+). Its function is as follows. ATP-dependent 3'-5' DNA helicase/translocase; binds dsDNA rather than ssDNA, unzipping it in a translocase rather than classical helicase activity. Component of the general transcription factor IIH (TFIIH) core complex, involved in spliced leader RNA (SL RNA) gene transcription by RNA polymerase II. TFIIH has an essential role in transcription initiation. When the pre-initiation complex (PIC) has been established, TFIIH is required for promoter opening and promoter escape. The ATPase activity of XPB is required for promoter opening and promoter escape. The sequence is that of TFIIH basal transcription factor complex helicase/translocase XPB subunit from Trypanosoma brucei brucei (strain 927/4 GUTat10.1).